The primary structure comprises 547 residues: Regulator of G-protein signaling 14 (547 aa).

Residues 19–59 (VSDGELTSTAGSQAQGEGRGSSLSIHSLPSGPSSPFSTEEQ) are disordered. Phosphoserine is present on residues S20, S42, S45, S143, S199, S203, and S218. A compositionally biased stretch (polar residues) spans 23-58 (ELTSTAGSQAQGEGRGSSLSIHSLPSGPSSPFSTEE). Residues 67-184 (SFERLLQDPR…VKSPLYQECL (118 aa)) enclose the RGS domain. A disordered region spans residues 191–220 (RPLREPGSSHLGSPDTARKKPKLKPGKSLP). Phosphothreonine is present on T249. Phosphoserine is present on S289. The tract at residues 300 to 427 (RPGKYCCVYL…LHRPGEKQPM (128 aa)) is necessary for interaction with RABGEF1. 2 consecutive RBD domains span residues 303–374 (KYCC…LENR) and 376–446 (TFQL…LDTP). The segment at 447-496 (PDAKMSEARSISPCRSQGCLPRTQTKDSHLPPSSSSLLVEDASSSTGNRQ) is disordered. Residues 476–491 (LPPSSSSLLVEDASSS) are compositionally biased toward low complexity. The GoLoco domain maps to 500 to 522 (IEGLVELLNRVQSSGAHDQRGLL).

In terms of assembly, interacts with GNAI1 and GNAI2. Interacts with GNAI3. Interacts with GNAO1. Interacts (via RGS and GoLoco domains) with GNAI1; the interaction occurs in the centrosomes. Interaction with GNAI1 or GNAI3 (via active GTP- or inactive GDP-bound forms) prevents association of RGS14 with centrosomes or nuclear localization. Interacts with RABGEF1; the interactions is GTP-dependent. Interacts with RAP2A; the interactions is GTP-dependent and does not alter its function on G(i) alpha subunits either as GAP or as GDI. Associates with microtubules. Found in a complex with at least BRAF, HRAS, MAP2K1, MAPK3 and RGS14. Interacts with RIC8A (via C-terminus). Interacts (via RBD 1 domain) with HRAS (active GTP-bound form preferentially). Interacts (via RBD domains) with BRAF (via N-terminus); the interaction mediates the formation of a ternary complex with RAF1. Interacts (via RBD domains) with RAF1 (via N-terminus); the interaction mediates the formation of a ternary complex with BRAF. Interacts with KRAS (active GTP-bound form preferentially), MRAS (active GTP-bound form preferentially), NRAS (active GTP-bound form preferentially) and RRAS (active GTP-bound form preferentially). Post-translationally, phosphorylated by PKC. Phosphorylation is increased in presence of forskolin and may enhance the GDI activity on G(i) alpha subunit GNAI1. As to expression, expressed in pyramidal neurons of the CA1, CA2 and fasciola cinerea (FC) subregions of the hippocampus and in the olfactory cortex (at protein level). Expressed in brain, spleen, heart, liver, lung, kidney, skin and thymus (at protein level). Expressed in granular layer of the cerebellum, forbrain, striatum, layer V of the cortex, olfactory cortex, tubercules, subthalamic and hippocampus, particularly in the CA2 region, to a lesser extent in the CA1 region and the external layer of the dentate gyrus. Expressed in neurons.

It is found in the nucleus. Its subcellular location is the PML body. The protein resides in the cytoplasm. The protein localises to the membrane. It localises to the cell membrane. It is found in the cytoskeleton. Its subcellular location is the spindle. The protein resides in the spindle pole. The protein localises to the microtubule organizing center. It localises to the centrosome. It is found in the cell projection. Its subcellular location is the dendrite. The protein resides in the dendritic spine. The protein localises to the postsynaptic density. In terms of biological role, regulates G protein-coupled receptor signaling cascades. Inhibits signal transduction by increasing the GTPase activity of G protein alpha subunits, thereby driving them into their inactive GDP-bound form. Besides, modulates signal transduction via G protein alpha subunits by functioning as a GDP-dissociation inhibitor (GDI). Has GDI activity on G(i) alpha subunits GNAI1 and GNAI3, but not on GNAI2 and G(o)-alpha subunit GNAO1. Has GAP activity on GNAI0, GNAI2 and GNAI3. May act as a scaffold integrating G protein and Ras/Raf MAPkinase signaling pathways. Inhibits platelet-derived growth factor (PDGF)-stimulated ERK1/ERK2 phosphorylation; a process depending on its interaction with HRAS and that is reversed by G(i) alpha subunit GNAI1. Acts as a positive modulator of microtubule polymerisation and spindle organization through a G(i)-alpha-dependent mechanism. Plays a role in cell division; required for completion of the first mitotic division of the embryo. Involved in visual memory processing capacity; when overexpressed in the V2 secondary visual cortex area. Involved in hippocampal-based learning and memory; acts as a suppressor of synaptic plasticity in CA2 neurons. Required for the nerve growth factor (NGF)-mediated neurite outgrowth. Involved in stress resistance. In Mus musculus (Mouse), this protein is Regulator of G-protein signaling 14 (Rgs14).